We begin with the raw amino-acid sequence, 257 residues long: Anamorsin homolog (257 aa).

Residues 1-134 (MSDRKNVLFV…KVGSSDKVTL (134 aa)) are N-terminal SAM-like domain. Residues 135–168 (NPEMKENVVSAWKLDDNNSETISEDDLLEADDLI) are linker. [2Fe-2S] cluster-binding residues include cysteine 178, cysteine 187, cysteine 190, and cysteine 192. The fe-S binding site A stretch occupies residues 178–192 (CATTKKAKACKDCSC). [4Fe-4S] cluster is bound by residues cysteine 218, cysteine 221, cysteine 229, and cysteine 232. 2 short sequence motifs (cx2C motif) span residues 218–221 (CGSC) and 229–232 (CASC). The interval 218–232 (CGSCYLGDAFRCASC) is fe-S binding site B.

This sequence belongs to the anamorsin family. In terms of assembly, monomer. The cofactor is [2Fe-2S] cluster. [4Fe-4S] cluster is required as a cofactor.

The protein resides in the cytoplasm. The protein localises to the mitochondrion intermembrane space. Functionally, component of the cytosolic iron-sulfur (Fe-S) protein assembly (CIA) machinery. Required for the maturation of extramitochondrial Fe-S proteins. Part of an electron transfer chain functioning in an early step of cytosolic Fe-S biogenesis, facilitating the de novo assembly of a [4Fe-4S] cluster on the cytosolic Fe-S scaffold complex. Electrons are transferred from NADPH via a FAD- and FMN-containing diflavin oxidoreductase. Together with the diflavin oxidoreductase, also required for the assembly of the diferric tyrosyl radical cofactor of ribonucleotide reductase (RNR), probably by providing electrons for reduction during radical cofactor maturation in the catalytic small subunit. This Acyrthosiphon pisum (Pea aphid) protein is Anamorsin homolog.